The primary structure comprises 241 residues: Dihydropteridine reductase (241 aa).

11–35 (LVYGGRGALGSRCVQAFRARNWWVA) serves as a coordination point for NADP(+). Residues lysine 70, lysine 76, lysine 93, and lysine 99 each carry the N6-succinyllysine modification. Tyrosine 147 (proton acceptor) is an active-site residue. Serine 170 carries the phosphoserine modification.

This sequence belongs to the short-chain dehydrogenases/reductases (SDR) family. Homodimer.

It catalyses the reaction 5,6,7,8-tetrahydropteridine + NAD(+) = 6,7-dihydropteridine + NADH + H(+). The catalysed reaction is 5,6,7,8-tetrahydropteridine + NADP(+) = 6,7-dihydropteridine + NADPH + H(+). Functionally, catalyzes the conversion of quinonoid dihydrobiopterin into tetrahydrobiopterin. The sequence is that of Dihydropteridine reductase (Qdpr) from Rattus norvegicus (Rat).